Reading from the N-terminus, the 43-residue chain is Protein PsbN (43 aa).

A helical membrane pass occupies residues asparagine 5–phenylalanine 27.

Belongs to the PsbN family.

It is found in the plastid. The protein resides in the chloroplast thylakoid membrane. Its function is as follows. May play a role in photosystem I and II biogenesis. This is Protein PsbN from Ephedra sinica (Chinese ephedra).